A 316-amino-acid polypeptide reads, in one-letter code: ATP synthase gamma chain (316 aa).

Belongs to the ATPase gamma chain family. F-type ATPases have 2 components, CF(1) - the catalytic core - and CF(0) - the membrane proton channel. CF(1) has five subunits: alpha(3), beta(3), gamma(1), delta(1), epsilon(1). CF(0) has three main subunits: a, b and c.

Its subcellular location is the cellular thylakoid membrane. Produces ATP from ADP in the presence of a proton gradient across the membrane. The gamma chain is believed to be important in regulating ATPase activity and the flow of protons through the CF(0) complex. This is ATP synthase gamma chain from Prochlorococcus marinus (strain NATL1A).